Here is a 429-residue protein sequence, read N- to C-terminus: TNF receptor-associated factor family protein DDB_G0267744 (429 aa).

An RING-type; degenerate zinc finger spans residues 22-60 (CVICSHLQVDIYQCVEGHFACKNCFLKMIELKKQCMTCR). 2 consecutive TRAF-type zinc fingers follow at residues 151–203 (HHLK…GEFN) and 204–265 (NHQD…SNSE).

Belongs to the TNF receptor-associated factor family.

The protein localises to the cytoplasm. In terms of biological role, probable adapter protein and signal transducer that links members of the tumor necrosis factor receptor family to different signaling pathways by association with the receptor cytoplasmic domain and kinases. The sequence is that of TNF receptor-associated factor family protein DDB_G0267744 from Dictyostelium discoideum (Social amoeba).